Consider the following 378-residue polypeptide: Leukosialin (378 aa).

Residues 1–7 (WAQVVSQ) form the signal peptide. At 8 to 231 (ENLPNTMTML…TVPPRPGSSG (224 aa)) the chain is on the extracellular side. Residues Thr-13, Thr-15, and Thr-20 are each glycosylated (O-linked (GalNAc...) threonine). Positions 13 to 33 (TMTMLPFTPNSESPSTSEALS) are disordered. Ser-23, Ser-25, and Ser-27 each carry an O-linked (GalNAc...) serine glycan. The O-linked (GalNAc...) threonine glycan is linked to Thr-28. Ser-29 and Ser-33 each carry an O-linked (GalNAc...) serine glycan. The O-linked (GalNAc...) threonine glycan is linked to Thr-34. O-linked (GalNAc...) serine glycosylation is found at Ser-36 and Ser-37. An O-linked (GalNAc...) threonine glycan is attached at Thr-40. O-linked (GalNAc...) serine glycosylation is found at Ser-108 and Ser-113. O-linked (GalNAc...) threonine glycosylation is found at Thr-118, Thr-120, and Thr-124. O-linked (GalNAc...) serine glycosylation is found at Ser-125 and Ser-126. O-linked (GalNAc...) threonine glycosylation is present at Thr-174. Residues Ser-176 and Ser-180 are each glycosylated (O-linked (GalNAc...) serine). O-linked (GalNAc...) threonine glycosylation occurs at Thr-183. The O-linked (GalNAc...) serine glycan is linked to Ser-187. Residue Thr-189 is glycosylated (O-linked (GalNAc...) threonine). Residues 232-254 (MLLVSMLIALTVVLVLVALLLLW) form a helical membrane-spanning segment. The tract at residues 255-285 (RQRQKRRTGALTLSRGGKRNGTVDAWAGPAR) is required for interaction with EZR, MSN and RDX and for co-localization to microvilli. Residues 255–378 (RQRQKRRTGA…AKDGAAPQSL (124 aa)) are Cytoplasmic-facing. Positions 259–273 (KRRTGALTLSRGGKR) match the Nuclear localization signal motif. The disordered stretch occupies residues 265 to 378 (LTLSRGGKRN…AKDGAAPQSL (114 aa)). Ser-268 bears the Phosphoserine mark. At Thr-276 the chain carries Phosphothreonine. Over residues 310-321 (GSGQRPTLTTFF) the composition is skewed to polar residues. Ser-311 is modified (phosphoserine). Phosphothreonine is present on Thr-316. A phosphoserine mark is found at Ser-322 and Ser-326. Residue Ser-330 is modified to Phosphoserine; by PKC/PRKCQ. Ser-354 is modified (phosphoserine). Residue Thr-361 is modified to Phosphothreonine.

Interacts with SIGLEC1. As to quaternary structure, monomer. Interacts with CTNNB1. Interacts with EZR, MSN and RDX (via FERM domain). In terms of processing, has a high content of sialic acid and O-linked carbohydrate structures. Phosphorylation at Ser-330 is regulated by chemokines, requires its association with ERM proteins (EZR, RDX and MSN) and is essential for its function in the regulation of T-cell trafficking to lymph nodes. Post-translationally, cleavage by CTSG releases its extracellular domain and triggers its intramembrane proteolysis by gamma-secretase releasing the CD43 cytoplasmic tail chain (CD43-ct) which translocates to the nucleus. In terms of processing, sumoylated. As to expression, cell surface of thymocytes, T-lymphocytes, neutrophils, plasma cells and myelomas.

The protein resides in the membrane. It localises to the cell projection. Its subcellular location is the microvillus. It is found in the uropodium. The protein localises to the nucleus. The protein resides in the PML body. Predominant cell surface sialoprotein of leukocytes which regulates multiple T-cell functions, including T-cell activation, proliferation, differentiation, trafficking and migration. Positively regulates T-cell trafficking to lymph-nodes via its association with ERM proteins (EZR, RDX and MSN). Negatively regulates Th2 cell differentiation and predisposes the differentiation of T-cells towards a Th1 lineage commitment. Promotes the expression of IFN-gamma by T-cells during T-cell receptor (TCR) activation of naive cells and induces the expression of IFN-gamma by CD4(+) T-cells and to a lesser extent by CD8(+) T-cells. Plays a role in preparing T-cells for cytokine sensing and differentiation into effector cells by inducing the expression of cytokine receptors IFNGR and IL4R, promoting IFNGR and IL4R signaling and by mediating the clustering of IFNGR with TCR. Acts as a major E-selectin ligand responsible for Th17 cell rolling on activated vasculature and recruitment during inflammation. Mediates Th17 cells, but not Th1 cells, adhesion to E-selectin. Acts as a T-cell counter-receptor for SIGLEC1. In terms of biological role, protects cells from apoptotic signals, promoting cell survival. In Rattus norvegicus (Rat), this protein is Leukosialin (Spn).